Reading from the N-terminus, the 236-residue chain is Proteasome subunit alpha (236 aa).

Belongs to the peptidase T1A family. As to quaternary structure, the 20S proteasome core is composed of 14 alpha and 14 beta subunits that assemble into four stacked heptameric rings, resulting in a barrel-shaped structure. The two inner rings, each composed of seven catalytic beta subunits, are sandwiched by two outer rings, each composed of seven alpha subunits. The catalytic chamber with the active sites is on the inside of the barrel. Has a gated structure, the ends of the cylinder being occluded by the N-termini of the alpha-subunits. Is capped by the proteasome-associated ATPase, ARC.

Its subcellular location is the cytoplasm. It functions in the pathway protein degradation; proteasomal Pup-dependent pathway. Its activity is regulated as follows. The formation of the proteasomal ATPase ARC-20S proteasome complex, likely via the docking of the C-termini of ARC into the intersubunit pockets in the alpha-rings, may trigger opening of the gate for substrate entry. Interconversion between the open-gate and close-gate conformations leads to a dynamic regulation of the 20S proteasome proteolysis activity. Functionally, component of the proteasome core, a large protease complex with broad specificity involved in protein degradation. The chain is Proteasome subunit alpha from Jonesia denitrificans (strain ATCC 14870 / DSM 20603 / BCRC 15368 / CIP 55.134 / JCM 11481 / NBRC 15587 / NCTC 10816 / Prevot 55134) (Listeria denitrificans).